Here is a 945-residue protein sequence, read N- to C-terminus: Chaperone protein ClpD, chloroplastic (945 aa).

The transit peptide at 1 to 89 directs the protein to the chloroplast; that stretch reads MEVLSTSSPL…FERFTERAIR (89 aa). 2 repeat regions span residues 90 to 146 and 168 to 233; these read AIIF…WDEA and FSIS…LKGE. Residues 90-233 form the Clp R domain; it reads AIIFSQKEAK…AAALTRLKGE (144 aa). A disordered region spans residues 233 to 264; it reads EIAKDGREPSSSSKGSFESPPSGRIAGSGPGG. Low complexity predominate over residues 241–255; it reads PSSSSKGSFESPPSG. Positions 271–523 are i; sequence LEQFCVDLTA…RARIEAFRKK (253 aa). 316–323 contributes to the ATP binding site; sequence GEAGVGKT. Residues 555–586 are disordered; it reads SRQKQDDGDAISDESGELVEESSLPPAAGDDE. A compositionally biased stretch (acidic residues) spans 562-574; the sequence is GDAISDESGELVE. The interval 590 to 781 is II; sequence VGPDDIAAVA…LIIMTSNVGS (192 aa). 664–671 is a binding site for ATP; sequence GPTGVGKT.

This sequence belongs to the ClpA/ClpB family. ClpD subfamily. As to quaternary structure, homodimer and homohexamer. Hexamerization upon addition of ATP. Interacts with CLPT1. Stably associated with the import machinery. The cofactor is Mg(2+). As to expression, expressed in stems and leaves.

The protein localises to the plastid. Its subcellular location is the chloroplast stroma. The enzyme catalyses ATP + H2O = ADP + phosphate + H(+). Its function is as follows. Molecular chaperone that interact with a ClpP-like protease involved in degradation of denatured proteins in the chloroplast. The ATPase activity of CLPD is stimulated by CLPT1. Has no ADPase activity. Interacts with transit peptides with a positional preference. Localization of the signal sequence at the N-terminal end of a protein seems mandatory for interaction to take place. This is Chaperone protein ClpD, chloroplastic from Arabidopsis thaliana (Mouse-ear cress).